Here is a 104-residue protein sequence, read N- to C-terminus: MKMRGVSVGVLVVAMMSGLAMAGSCNSQEPDCGPSECCLQGWMRYSTRGCAPLGEAGSSCNVFTQAPVKGFYIGMCPCRAGLVCTRPSATCQLPSQDNTLDSYY.

Residues 1 to 22 (MKMRGVSVGVLVVAMMSGLAMA) form the signal peptide. Cystine bridges form between C25-C38, C32-C50, C37-C76, C60-C84, and C78-C91.

The protein belongs to the AVIT (prokineticin) family.

It is found in the secreted. Its function is as follows. Cytokine directly involved in hematopoiesis. The polypeptide is Astakine (Pacifastacus leniusculus (Signal crayfish)).